The sequence spans 207 residues: Large ribosomal subunit protein uL4 (207 aa).

The tract at residues 49-78 (HAVKNRSAVSGGGRKPWRQKGTGRARQGSI) is disordered.

It belongs to the universal ribosomal protein uL4 family. Part of the 50S ribosomal subunit.

Functionally, one of the primary rRNA binding proteins, this protein initially binds near the 5'-end of the 23S rRNA. It is important during the early stages of 50S assembly. It makes multiple contacts with different domains of the 23S rRNA in the assembled 50S subunit and ribosome. Its function is as follows. Forms part of the polypeptide exit tunnel. The sequence is that of Large ribosomal subunit protein uL4 from Streptococcus uberis (strain ATCC BAA-854 / 0140J).